The sequence spans 861 residues: Nuclear pore complex protein NUP93A (861 aa).

It belongs to the nucleoporin interacting component (NIC) family. As to quaternary structure, part of the nuclear pore complex (NPC). The NPC has an eight-fold symmetrical structure comprising a central transport channel and two rings, the cytoplasmic and nuclear rings, to which eight filaments are attached. The cytoplasmic filaments have loose ends, while the nuclear filaments are joined in a distal ring, forming a nuclear basket. NPCs are highly dynamic in configuration and composition, and can be devided in 3 subcomplexes, the NUP62 subcomplex, the NUP107-160 subcomplex and the NUP93 subcomplex, containing approximately 30 different nucleoporin proteins.

It is found in the nucleus envelope. Its subcellular location is the nucleus. It localises to the nuclear pore complex. This chain is Nuclear pore complex protein NUP93A, found in Arabidopsis thaliana (Mouse-ear cress).